A 499-amino-acid polypeptide reads, in one-letter code: ATP synthase subunit alpha (499 aa).

Residue 169-176 (GDRGTGKT) coordinates ATP.

The protein belongs to the ATPase alpha/beta chains family. F-type ATPases have 2 components, CF(1) - the catalytic core - and CF(0) - the membrane proton channel. CF(1) has five subunits: alpha(3), beta(3), gamma(1), delta(1), epsilon(1). CF(0) has three main subunits: a(1), b(2) and c(9-12). The alpha and beta chains form an alternating ring which encloses part of the gamma chain. CF(1) is attached to CF(0) by a central stalk formed by the gamma and epsilon chains, while a peripheral stalk is formed by the delta and b chains.

The protein localises to the cell inner membrane. It catalyses the reaction ATP + H2O + 4 H(+)(in) = ADP + phosphate + 5 H(+)(out). Produces ATP from ADP in the presence of a proton gradient across the membrane. The alpha chain is a regulatory subunit. This is ATP synthase subunit alpha from Brachyspira hyodysenteriae (strain ATCC 49526 / WA1).